The primary structure comprises 124 residues: Putative transmembrane protein FLJ36131 (124 aa).

The Cytoplasmic segment spans residues 1-2 (MY). A helical membrane pass occupies residues 3–23 (VSISFLLGLSHLVLCCLLTFI). Residues 24–124 (VNFYLPPESI…LLTTTSYSVS (101 aa)) are Extracellular-facing. A glycan (N-linked (GlcNAc...) asparagine) is linked at Asn41.

The protein resides in the membrane. The polypeptide is Putative transmembrane protein FLJ36131 (Homo sapiens (Human)).